Consider the following 74-residue polypeptide: Large ribosomal subunit protein bL31 (74 aa).

It belongs to the bacterial ribosomal protein bL31 family. Type A subfamily. As to quaternary structure, part of the 50S ribosomal subunit.

Binds the 23S rRNA. The chain is Large ribosomal subunit protein bL31 from Afipia carboxidovorans (strain ATCC 49405 / DSM 1227 / KCTC 32145 / OM5) (Oligotropha carboxidovorans).